Consider the following 132-residue polypeptide: Small ribosomal subunit protein uS8 (132 aa).

It belongs to the universal ribosomal protein uS8 family. As to quaternary structure, part of the 30S ribosomal subunit. Contacts proteins S5 and S12.

One of the primary rRNA binding proteins, it binds directly to 16S rRNA central domain where it helps coordinate assembly of the platform of the 30S subunit. This Rhodococcus erythropolis (strain PR4 / NBRC 100887) protein is Small ribosomal subunit protein uS8.